Consider the following 469-residue polypeptide: GDNF family receptor alpha-1 (469 aa).

The N-terminal stretch at 1–27 (MFLALLYLALPLADVLLSAEVSGLPGG) is a signal peptide. Tandem repeats lie at residues 28-116 (DRLD…LQGN), 149-237 (KGNN…YEDR), and 238-341 (EKPN…KNAI). A disulfide bridge connects residues cysteine 39 and cysteine 45. N-linked (GlcNAc...) asparagine glycans are attached at residues asparagine 62 and asparagine 163. Disulfide bonds link cysteine 153–cysteine 213, cysteine 160–cysteine 166, cysteine 177–cysteine 191, cysteine 186–cysteine 232, cysteine 215–cysteine 220, cysteine 242–cysteine 312, cysteine 249–cysteine 255, cysteine 266–cysteine 284, cysteine 276–cysteine 336, and cysteine 314–cysteine 324. Asparagine 346 and asparagine 405 each carry an N-linked (GlcNAc...) asparagine glycan. Serine 430 carries the GPI-anchor amidated serine lipid modification. Positions 431–469 (HISSENSFALPTSFYPSTPLILMTIALSLFLFLSSSVVL) are cleaved as a propeptide — removed in mature form.

Belongs to the GDNFR family. In terms of assembly, interacts with GDNF ligand and RET: forms a 2:2:2 ternary complex composed of GDNF ligand, GFRA1 and RET receptor.

The protein resides in the cell membrane. Its subcellular location is the golgi apparatus. It is found in the trans-Golgi network. The protein localises to the endosome. It localises to the multivesicular body. Coreceptor for GDNF, a neurotrophic factor that enhances survival and morphological differentiation of dopaminergic neurons and increases their high-affinity dopamine uptake. GDNF-binding leads to autophosphorylation and activation of the RET receptor. In Gallus gallus (Chicken), this protein is GDNF family receptor alpha-1 (GFRA1).